The sequence spans 353 residues: Draxin-B (353 aa).

An N-terminal signal peptide occupies residues 1–21; it reads MASSWCLPLALLVSNLAVSHS. Disordered regions lie at residues 23 to 183, 198 to 222, and 246 to 268; these read EPSS…KEGS, TVMSEHPPMLPPASTKPKKSGRGKV, and VDAWPSSRKKDKRRSKNLSSGNV. Residues 138–167 show a composition bias toward basic residues; sequence GPHKGKAQGHGHHFDHRRHGGRRDKGRHTK. A compositionally biased stretch (basic residues) spans 252 to 261; the sequence is SRKKDKRRSK. 2 N-linked (GlcNAc...) asparagine glycosylation sites follow: Asn-262 and Asn-267.

It belongs to the draxin family.

The protein resides in the secreted. In terms of biological role, chemorepulsive axon guidance protein required for the development of spinal cord and forebrain commissures. Acts as a chemorepulsive guidance protein for commissural axons during development. Able to inhibit or repel neurite outgrowth from dorsal spinal cord. This is Draxin-B (draxin-B) from Salmo salar (Atlantic salmon).